Reading from the N-terminus, the 882-residue chain is Valine--tRNA ligase (882 aa).

The 'HIGH' region signature appears at 45 to 55 (PNVTGKLHLGH). The 'KMSKS' region signature appears at 519–523 (KMSKS). Position 522 (Lys522) interacts with ATP. Residues 808–882 (LADLLNVEEE…RIAEMHKLVK (75 aa)) are a coiled coil.

It belongs to the class-I aminoacyl-tRNA synthetase family. ValS type 1 subfamily. Monomer.

It is found in the cytoplasm. The enzyme catalyses tRNA(Val) + L-valine + ATP = L-valyl-tRNA(Val) + AMP + diphosphate. Its function is as follows. Catalyzes the attachment of valine to tRNA(Val). As ValRS can inadvertently accommodate and process structurally similar amino acids such as threonine, to avoid such errors, it has a 'posttransfer' editing activity that hydrolyzes mischarged Thr-tRNA(Val) in a tRNA-dependent manner. The protein is Valine--tRNA ligase of Streptococcus pyogenes serotype M18 (strain MGAS8232).